We begin with the raw amino-acid sequence, 567 residues long: Proline--tRNA ligase (567 aa).

This sequence belongs to the class-II aminoacyl-tRNA synthetase family. ProS type 1 subfamily. Homodimer.

It localises to the cytoplasm. The enzyme catalyses tRNA(Pro) + L-proline + ATP = L-prolyl-tRNA(Pro) + AMP + diphosphate. Its function is as follows. Catalyzes the attachment of proline to tRNA(Pro) in a two-step reaction: proline is first activated by ATP to form Pro-AMP and then transferred to the acceptor end of tRNA(Pro). As ProRS can inadvertently accommodate and process non-cognate amino acids such as alanine and cysteine, to avoid such errors it has two additional distinct editing activities against alanine. One activity is designated as 'pretransfer' editing and involves the tRNA(Pro)-independent hydrolysis of activated Ala-AMP. The other activity is designated 'posttransfer' editing and involves deacylation of mischarged Ala-tRNA(Pro). The misacylated Cys-tRNA(Pro) is not edited by ProRS. The sequence is that of Proline--tRNA ligase from Streptomyces coelicolor (strain ATCC BAA-471 / A3(2) / M145).